The primary structure comprises 236 residues: Ribose-5-phosphate isomerase A 2 (236 aa).

Substrate contacts are provided by residues 31–34 (SGTT), 86–89 (DGPD), and 99–102 (KGGG). The active-site Proton acceptor is glutamate 108. Lysine 126 contributes to the substrate binding site.

Belongs to the ribose 5-phosphate isomerase family. Homodimer.

It catalyses the reaction aldehydo-D-ribose 5-phosphate = D-ribulose 5-phosphate. The protein operates within carbohydrate degradation; pentose phosphate pathway; D-ribose 5-phosphate from D-ribulose 5-phosphate (non-oxidative stage): step 1/1. Functionally, catalyzes the reversible conversion of ribose-5-phosphate to ribulose 5-phosphate. This chain is Ribose-5-phosphate isomerase A 2, found in Yersinia pestis.